Here is an 87-residue protein sequence, read N- to C-terminus: Phytosulfokines 2 (87 aa).

Residues 1-22 form the signal peptide; sequence MANVSALLTIALLLCSTLMCTA. A propeptide spanning residues 23–77 is cleaved from the precursor; sequence RPEPAISISITTAADPCNMEKKIEGKLDDMHMVDENCGADDEDCLMRRTLVAHTD. 2 positions are modified to sulfotyrosine: Tyr-78 and Tyr-80. A propeptide spanning residues 83–87 is cleaved from the precursor; sequence KKKHP.

It belongs to the phytosulfokine family. Sulfation is important for activity and for the binding to a putative membrane receptor. In terms of processing, PSK-beta is an enzymatic derivative of PSK-alpha. In terms of tissue distribution, expressed in stems, roots and leaves.

It is found in the secreted. Its function is as follows. Promotes plant cell differentiation, organogenesis and somatic embryogenesis as well as cell proliferation. The polypeptide is Phytosulfokines 2 (PSK2) (Arabidopsis thaliana (Mouse-ear cress)).